Reading from the N-terminus, the 204-residue chain is Probable GTP-binding protein EngB (204 aa).

The EngB-type G domain occupies 23–195; it reads TLPEIAFVGR…ASALMQLLAM (173 aa). Residues 31–38, 58–62, 76–79, 143–146, and 174–176 each bind GTP; these read GRSNVGKS, GRTRE, DLPG, TKID, and FSA. Residues serine 38 and threonine 60 each contribute to the Mg(2+) site.

It belongs to the TRAFAC class TrmE-Era-EngA-EngB-Septin-like GTPase superfamily. EngB GTPase family. The cofactor is Mg(2+).

In terms of biological role, necessary for normal cell division and for the maintenance of normal septation. The protein is Probable GTP-binding protein EngB of Gemmatimonas aurantiaca (strain DSM 14586 / JCM 11422 / NBRC 100505 / T-27).